A 1323-amino-acid chain; its full sequence is Receptor tyrosine-protein kinase let-23 (1323 aa).

An N-terminal signal peptide occupies residues M1–F20. The Extracellular segment spans residues F21–R818. N-linked (GlcNAc...) asparagine glycosylation is found at N91 and N169. Intrachain disulfides connect C220–C228, C224–C236, C244–C251, C248–C262, C263–C271, C267–C279, C282–C291, C295–C322, C326–C337, C341–C356, and C359–C364. N255 carries an N-linked (GlcNAc...) asparagine glycan. A glycan (N-linked (GlcNAc...) asparagine) is linked at N376. Intrachain disulfides connect C520–C529, C524–C537, C540–C549, C553–C567, C570–C577, C574–C585, C588–C604, C608–C620, C623–C632, C627–C644, C647–C660, C670–C693, C696–C703, C700–C715, C717–C731, C735–C750, C753–C763, C757–C771, C774–C787, and C791–C805. The N-linked (GlcNAc...) asparagine glycan is linked to N561. Residue N655 is glycosylated (N-linked (GlcNAc...) asparagine). The N-linked (GlcNAc...) asparagine glycan is linked to N746. N776 carries an N-linked (GlcNAc...) asparagine glycan. The helical transmembrane segment at M819–V839 threads the bilayer. The Cytoplasmic segment spans residues Y840–L1323. One can recognise a Protein kinase domain in the interval T885 to L1152. ATP is bound by residues L891 to V899 and K919. Catalysis depends on D1010, which acts as the Proton acceptor. The span at G1265–Y1289 shows a compositional bias: polar residues. The tract at residues G1265 to L1323 is disordered. The segment covering P1293–T1302 has biased composition (basic and acidic residues). Acidic residues predominate over residues S1303–E1315.

The protein belongs to the protein kinase superfamily. Tyr protein kinase family. EGF receptor subfamily. Expressed in vulval precursor cells (at protein level). Expressed in ALA neurons, 2 ventral head neurons, a single neuron in the tail, pharyngeal-intestinal valve and posterior arcade epithelial cells.

It localises to the apical cell membrane. Its subcellular location is the basolateral cell membrane. The enzyme catalyses L-tyrosyl-[protein] + ATP = O-phospho-L-tyrosyl-[protein] + ADP + H(+). Functionally, tyrosine-protein kinase receptor which, upon binding ligand lin-3, activates 2 signaling cascades: the let-60/Ras and MAP kinase signaling pathway and the let-60-independent phospholipase C-mediated Ca(2+) signaling pathway. Each pathway regulates distinct functions. By activating let-60/Ras, regulates larval development, induction of vulva cell precursors during vulva development, male spicule formation and posterior development of the epidermis. Probably by activating phospholipase plc-3 and inositol 1,4,5-trisphosphate receptor itr-1 signaling cascade downstream of ligand lin-3, plays a role in ovulation by promoting ovulatory gonadal sheath cell contractions. Probably by regulating neuronal transmission in ALA neurons, mediates, independently of let-60/Ras, the decrease in pharyngeal pumping and locomotion during the quiescent state that precedes each larval molt, downstream of lin-3 and upstream of plc-3. This chain is Receptor tyrosine-protein kinase let-23, found in Caenorhabditis elegans.